Here is an 85-residue protein sequence, read N- to C-terminus: Acyl carrier protein ScoB (85 aa).

One can recognise a Carrier domain in the interval Met1–Gln77. Position 38 is an O-(pantetheine 4'-phosphoryl)serine (Ser38).

Belongs to the acyl carrier protein (ACP) family. Pantetheine 4'-phosphate is required as a cofactor.

The protein operates within lipid metabolism; fatty acid metabolism. Functionally, acyl-carrier protein (ACP) involved in the biosynthesis of a unique class of isonitrile lipopeptides (INLPs). Is the dedicated ACP for the loading of activated acyl groups catalyzed by ScoC. In Streptomyces coeruleorubidus, this protein is Acyl carrier protein ScoB.